The sequence spans 109 residues: Cyclic di-AMP receptor A (109 aa).

3',3'-c-di-AMP is bound by residues threonine 21, phenylalanine 25, threonine 28, glycine 35, phenylalanine 36, leucine 37, asparagine 41, glycine 47, glutamate 92, and glycine 94.

Homotrimer.

It localises to the cytoplasm. Binds cyclic di-AMP (c-di-AMP) and is probably involved in c-di-AMP-mediated signaling pathways. In vitro, can also bind cyclic GMP-AMP (3'3'-cGAMP), with lower affinity, but not c-di-GMP or 2'3'-cGAMP. This Bacillus subtilis (strain 168) protein is Cyclic di-AMP receptor A.